A 184-amino-acid polypeptide reads, in one-letter code: Photosystem I assembly protein Ycf4 (184 aa).

2 helical membrane passes run 22–42 and 57–77; these read FCWA…GTSS and IIFF…LFIS.

Belongs to the Ycf4 family.

The protein localises to the plastid. It localises to the chloroplast thylakoid membrane. Its function is as follows. Seems to be required for the assembly of the photosystem I complex. The sequence is that of Photosystem I assembly protein Ycf4 from Lepidium virginicum (Virginia pepperweed).